We begin with the raw amino-acid sequence, 91 residues long: Small ribosomal subunit protein uS19 (91 aa).

It belongs to the universal ribosomal protein uS19 family.

Its function is as follows. Protein S19 forms a complex with S13 that binds strongly to the 16S ribosomal RNA. The protein is Small ribosomal subunit protein uS19 of Methylibium petroleiphilum (strain ATCC BAA-1232 / LMG 22953 / PM1).